The chain runs to 310 residues: Putative S-adenosyl-L-methionine-dependent methyltransferase MMAR_3534 (310 aa).

Residues D131 and 160–161 (DL) contribute to the S-adenosyl-L-methionine site.

The protein belongs to the UPF0677 family.

Exhibits S-adenosyl-L-methionine-dependent methyltransferase activity. In Mycobacterium marinum (strain ATCC BAA-535 / M), this protein is Putative S-adenosyl-L-methionine-dependent methyltransferase MMAR_3534.